Consider the following 258-residue polypeptide: Kallikrein-1 (258 aa).

A signal peptide spans 1-18 (MWFLVLCLALSLGGTGAA). Residues 19 to 24 (PPIQSR) constitute a propeptide, activation peptide. The region spanning 25-255 (IVGGWECSQP…YVKWIEDTIA (231 aa)) is the Peptidase S1 domain. Disulfide bonds link cysteine 31/cysteine 170, cysteine 47/cysteine 63, cysteine 149/cysteine 216, cysteine 181/cysteine 195, and cysteine 206/cysteine 231. Catalysis depends on histidine 62, which acts as the Charge relay system. Serine 90 carries O-linked (GalNAc...) serine glycosylation. N-linked (GlcNAc...) asparagine glycosylation occurs at asparagine 99. An O-linked (GalNAc...) serine glycan is attached at serine 101. An N-linked (GlcNAc...) asparagine glycan is attached at asparagine 105. The active-site Charge relay system is the aspartate 117. N-linked (GlcNAc...) asparagine glycosylation is present at asparagine 161. Residue serine 163 is glycosylated (O-linked (GalNAc...) serine). Serine 210 acts as the Charge relay system in catalysis.

The protein belongs to the peptidase S1 family. Kallikrein subfamily.

The catalysed reaction is Preferential cleavage of Arg-|-Xaa bonds in small molecule substrates. Highly selective action to release kallidin (lysyl-bradykinin) from kininogen involves hydrolysis of Met-|-Xaa or Leu-|-Xaa.. Its function is as follows. Glandular kallikreins cleave Met-Lys and Arg-Ser bonds in kininogen to release Lys-bradykinin. This is Kallikrein-1 (KLK1) from Papio hamadryas (Hamadryas baboon).